Consider the following 334-residue polypeptide: MIEADRIISASPQREEEVVDRAIRPKLLTDYVGQPSVREQMEIFIKAAKLRHEALDHLLIFGPPGLGKTTLANIVANEMGVNIRTTSGPVLEKAGDLAAMLTNLEPYDILFIDEIHRLSPAIEEVLYPAMEDYQLDIMIGEGPAARSIKLDLPPFTLVGATTRAGSLTSPLRDRFGIVQRLEFYNVDDLTSIVKRSAACLNLNLSADGAYEVARRSRGTPRIANRLLRRVRDYADVRNNGVITSEIAKQALVMLDVDPQGFDFMDIKLLQAIVERFDGGPVGLDNLAAAIGEERETIEDVLEPYLIQQGFLQRTPRGRIATTRTYAHLGISLSE.

The large ATPase domain (RuvB-L) stretch occupies residues 4 to 184 (ADRIISASPQ…FGIVQRLEFY (181 aa)). ATP contacts are provided by residues Ile23, Arg24, Gly65, Lys68, Thr69, Thr70, 131–133 (EDY), Arg174, Tyr184, and Arg221. Thr69 is a binding site for Mg(2+). Residues 185–255 (NVDDLTSIVK…IAKQALVMLD (71 aa)) are small ATPAse domain (RuvB-S). Positions 258–334 (PQGFDFMDIK…YAHLGISLSE (77 aa)) are head domain (RuvB-H). 3 residues coordinate DNA: Arg294, Arg313, and Arg318.

The protein belongs to the RuvB family. Homohexamer. Forms an RuvA(8)-RuvB(12)-Holliday junction (HJ) complex. HJ DNA is sandwiched between 2 RuvA tetramers; dsDNA enters through RuvA and exits via RuvB. An RuvB hexamer assembles on each DNA strand where it exits the tetramer. Each RuvB hexamer is contacted by two RuvA subunits (via domain III) on 2 adjacent RuvB subunits; this complex drives branch migration. In the full resolvosome a probable DNA-RuvA(4)-RuvB(12)-RuvC(2) complex forms which resolves the HJ.

It is found in the cytoplasm. The catalysed reaction is ATP + H2O = ADP + phosphate + H(+). Its function is as follows. The RuvA-RuvB-RuvC complex processes Holliday junction (HJ) DNA during genetic recombination and DNA repair, while the RuvA-RuvB complex plays an important role in the rescue of blocked DNA replication forks via replication fork reversal (RFR). RuvA specifically binds to HJ cruciform DNA, conferring on it an open structure. The RuvB hexamer acts as an ATP-dependent pump, pulling dsDNA into and through the RuvAB complex. RuvB forms 2 homohexamers on either side of HJ DNA bound by 1 or 2 RuvA tetramers; 4 subunits per hexamer contact DNA at a time. Coordinated motions by a converter formed by DNA-disengaged RuvB subunits stimulates ATP hydrolysis and nucleotide exchange. Immobilization of the converter enables RuvB to convert the ATP-contained energy into a lever motion, pulling 2 nucleotides of DNA out of the RuvA tetramer per ATP hydrolyzed, thus driving DNA branch migration. The RuvB motors rotate together with the DNA substrate, which together with the progressing nucleotide cycle form the mechanistic basis for DNA recombination by continuous HJ branch migration. Branch migration allows RuvC to scan DNA until it finds its consensus sequence, where it cleaves and resolves cruciform DNA. The chain is Holliday junction branch migration complex subunit RuvB from Haemophilus ducreyi (strain 35000HP / ATCC 700724).